A 147-amino-acid chain; its full sequence is Large ribosomal subunit protein uL16 (147 aa).

The protein belongs to the universal ribosomal protein uL16 family. As to quaternary structure, part of the 50S ribosomal subunit.

Functionally, binds 23S rRNA and is also seen to make contacts with the A and possibly P site tRNAs. The sequence is that of Large ribosomal subunit protein uL16 from Lactobacillus delbrueckii subsp. bulgaricus (strain ATCC 11842 / DSM 20081 / BCRC 10696 / JCM 1002 / NBRC 13953 / NCIMB 11778 / NCTC 12712 / WDCM 00102 / Lb 14).